Reading from the N-terminus, the 329-residue chain is Acetyl-coenzyme A carboxylase carboxyl transferase subunit alpha (329 aa).

The CoA carboxyltransferase C-terminal domain maps to 40–294 (QLESLAARRR…RAAIERHLEQ (255 aa)).

The protein belongs to the AccA family. As to quaternary structure, acetyl-CoA carboxylase is a heterohexamer composed of biotin carboxyl carrier protein (AccB), biotin carboxylase (AccC) and two subunits each of ACCase subunit alpha (AccA) and ACCase subunit beta (AccD).

It localises to the cytoplasm. The catalysed reaction is N(6)-carboxybiotinyl-L-lysyl-[protein] + acetyl-CoA = N(6)-biotinyl-L-lysyl-[protein] + malonyl-CoA. It functions in the pathway lipid metabolism; malonyl-CoA biosynthesis; malonyl-CoA from acetyl-CoA: step 1/1. Its function is as follows. Component of the acetyl coenzyme A carboxylase (ACC) complex. First, biotin carboxylase catalyzes the carboxylation of biotin on its carrier protein (BCCP) and then the CO(2) group is transferred by the carboxyltransferase to acetyl-CoA to form malonyl-CoA. The protein is Acetyl-coenzyme A carboxylase carboxyl transferase subunit alpha of Synechococcus sp. (strain CC9605).